The following is a 394-amino-acid chain: Cell adhesion molecule 3 (394 aa).

Residues 1-17 (MHHPVILLLCLSSLAGA) form the signal peptide. The Extracellular segment spans residues 18–326 (ANLPPEDLSQ…PIPSTSSIDH (309 aa)). Residues 22–120 (PEDLSQPVTA…PVRTAKAVVT (99 aa)) enclose the Ig-like V-type domain. 2 disulfides stabilise this stretch: C45–C105 and C147–C204. Ig-like C2-type domains lie at 128-223 (PQVS…HKIQ) and 228-306 (PTAK…TFIT). The tract at residues 217–240 (SSSHKIQVQYKPTAKIESRPSMPR) is disordered. Residues 230 to 240 (AKIESRPSMPR) are compositionally biased toward basic and acidic residues. Residues C249 and C295 are joined by a disulfide bond. The chain crosses the membrane as a helical span at residues 327-347 (AVIGGVVAVIAFLLFCLLIVL). The Cytoplasmic segment spans residues 348–394 (GRYLIRHKGTYLTHEAKGSDDAPDADTAIINAEGGQGGSDDKKEYFI). Residues 363–394 (AKGSDDAPDADTAIINAEGGQGGSDDKKEYFI) are disordered.

It belongs to the nectin family.

The protein resides in the cell membrane. The protein localises to the cell junction. Functionally, may be involved in cell-cell adhesion. The sequence is that of Cell adhesion molecule 3 (cadm3) from Xenopus laevis (African clawed frog).